Here is a 356-residue protein sequence, read N- to C-terminus: Neurogenic differentiation factor 1 (356 aa).

Residues 1-94 (MTKSYSESGL…GPKKKKMTKA (94 aa)) are disordered. Over residues 58–78 (EEEDEDEDLEEEEEEEEEDDD) the composition is skewed to acidic residues. Positions 81-93 (PKRRGPKKKKMTK) are enriched in basic residues. The Nuclear localization signal signature appears at 87–93 (KKKKMTK). A bHLH domain is found at 101 to 153 (LRRMKANARERNRMHGLNAALDNLRKVVPCYSKTQKLSKIETLRLAKNYIWAL). A phosphoserine mark is found at serine 162, serine 259, serine 266, and serine 274. Residue serine 335 is modified to Phosphoserine; by CaMK2.

In terms of assembly, efficient DNA-binding requires dimerization with another bHLH protein. Heterodimer with TCF3/E47; the heterodimer is inhibited in presence of ID2, but not NR0B2, to E-box element. Interacts with EP300; the interaction is inhibited by NR0B2. Interacts with RREB1. Interacts with ATOH8. Phosphorylated. In islet cells, phosphorylated on Ser-274 upon glucose stimulation; which may be required for nuclear localization. In activated neurons, phosphorylated on Ser-335; which promotes dendritic growth. Phosphorylated by MAPK1; phosphorylation regulates heterodimerization and DNA-binding activities. Phosphorylation on Ser-266 and Ser-274 increases transactivation on the insulin promoter in glucose-stimulated insulinoma cells.

It is found in the cytoplasm. Its subcellular location is the nucleus. Acts as a transcriptional activator: mediates transcriptional activation by binding to E box-containing promoter consensus core sequences 5'-CANNTG-3'. Associates with the p300/CBP transcription coactivator complex to stimulate transcription of the secretin gene as well as the gene encoding the cyclin-dependent kinase inhibitor CDKN1A. Contributes to the regulation of several cell differentiation pathways, like those that promote the formation of early retinal ganglion cells, inner ear sensory neurons, granule cells forming either the cerebellum or the dentate gyrus cell layer of the hippocampus, endocrine islet cells of the pancreas and enteroendocrine cells of the small intestine. Together with PAX6 or SIX3, is required for the regulation of amacrine cell fate specification. Also required for dendrite morphogenesis and maintenance in the cerebellar cortex. Associates with chromatin to enhancer regulatory elements in genes encoding key transcriptional regulators of neurogenesis. The polypeptide is Neurogenic differentiation factor 1 (NEUROD1) (Homo sapiens (Human)).